Consider the following 417-residue polypeptide: UDP-N-acetylglucosamine 1-carboxyvinyltransferase 2 (417 aa).

Lys-22 to Asn-23 contributes to the phosphoenolpyruvate binding site. Arg-94 provides a ligand contact to UDP-N-acetyl-alpha-D-glucosamine. Residue Cys-118 is the Proton donor of the active site. Residue Cys-118 is modified to 2-(S-cysteinyl)pyruvic acid O-phosphothioketal. Residues Arg-123–Leu-127, Asp-306, and Ile-328 each bind UDP-N-acetyl-alpha-D-glucosamine.

This sequence belongs to the EPSP synthase family. MurA subfamily.

Its subcellular location is the cytoplasm. The catalysed reaction is phosphoenolpyruvate + UDP-N-acetyl-alpha-D-glucosamine = UDP-N-acetyl-3-O-(1-carboxyvinyl)-alpha-D-glucosamine + phosphate. It functions in the pathway cell wall biogenesis; peptidoglycan biosynthesis. Its function is as follows. Cell wall formation. Adds enolpyruvyl to UDP-N-acetylglucosamine. This chain is UDP-N-acetylglucosamine 1-carboxyvinyltransferase 2, found in Clostridium tetani (strain Massachusetts / E88).